The chain runs to 171 residues: UPF0312 protein SAV2687 (171 aa).

Belongs to the UPF0312 family.

In Staphylococcus aureus (strain Mu50 / ATCC 700699), this protein is UPF0312 protein SAV2687.